The chain runs to 648 residues: Probable alpha-galactosidase D (648 aa).

The first 16 residues, 1–16 (MEFIVSLLLLSPALVA), serve as a signal peptide directing secretion. Asn-84 and Asn-90 each carry an N-linked (GlcNAc...) asparagine glycan. Cys-123 and Cys-156 are joined by a disulfide. Residue Asp-154 is the Nucleophile of the active site. 199–203 (EWGID) contributes to the substrate binding site. Asp-221 serves as the catalytic Proton donor. Residues Asn-339, Asn-350, Asn-505, and Asn-572 are each glycosylated (N-linked (GlcNAc...) asparagine).

Belongs to the glycosyl hydrolase 27 family.

It localises to the secreted. It catalyses the reaction Hydrolysis of terminal, non-reducing alpha-D-galactose residues in alpha-D-galactosides, including galactose oligosaccharides, galactomannans and galactolipids.. Functionally, hydrolyzes a variety of simple alpha-D-galactoside as well as more complex molecules such as oligosaccharides and polysaccharides. This chain is Probable alpha-galactosidase D (aglD), found in Aspergillus fumigatus (strain CBS 144.89 / FGSC A1163 / CEA10) (Neosartorya fumigata).